Reading from the N-terminus, the 148-residue chain is uncharacterized protein (148 aa).

The span at 1-11 (MKPRNINNSLP) shows a compositional bias: polar residues. The interval 1 to 31 (MKPRNINNSLPLQPLVPDQENKNKKNEEKSV) is disordered. The segment covering 19–30 (QENKNKKNEEKS) has biased composition (basic and acidic residues).

This is an uncharacterized protein from Escherichia coli (strain K12).